We begin with the raw amino-acid sequence, 1449 residues long: Gag-Pol polyprotein (1449 aa).

G2 carries the N-myristoyl glycine; by host lipid modification. A Nuclear export signal motif is present at residues 16 to 22 (LEKVRLR). The short motif at 26-32 (KKKYMLK) is the Nuclear localization signal element. The interval 215–237 (DLQHPQPGPLPAGQLREPRGSDI) is disordered. 2 consecutive CCHC-type zinc fingers follow at residues 392-409 (IKCWNCGKEGHSAKQCRA) and 413-430 (QGCWKCGKTGHVMAKCPE). The interval 442 to 494 (GKEAPQFPHGPDASGADTNCSPRGSSCGSTEELHEDGQKAEGEQRETLQGGDR) is disordered. Residues 457-470 (ADTNCSPRGSSCGS) are compositionally biased toward polar residues. The span at 472 to 487 (EELHEDGQKAEGEQRE) shows a compositional bias: basic and acidic residues. In terms of domain architecture, Peptidase A2 spans 518–587 (VEVLLDTGAD…TPINIFGRNL (70 aa)). The active-site For protease activity; shared with dimeric partner is D523. One can recognise a Reverse transcriptase domain in the interval 641-831 (DGQLEEAPPT…PPFQWMGYEL (191 aa)). D707, D782, and D783 together coordinate Mg(2+). Positions 824–832 (FQWMGYELW) are RT 'primer grip'. A Tryptophan repeat motif motif is present at residues 994–1010 (WEQWWTDYWQVTWIPDW). The 124-residue stretch at 1030–1153 (IQGAETFYVD…VDHLVSQGIR (124 aa)) folds into the RNase H type-1 domain. D1039, E1074, D1094, and D1145 together coordinate Mg(2+). The segment at 1159-1200 (KKIEPAQEEHEKYHSNVKELVFKFGLPRLVAKQIVDTCDKCH) adopts an Integrase-type zinc-finger fold. Zn(2+) contacts are provided by H1168, H1172, C1196, and C1199. Residues 1210–1360 (VNAELGTWQM…TPAERLVNMI (151 aa)) enclose the Integrase catalytic domain. D1220 and D1272 together coordinate Mg(2+). Positions 1379–1426 (FRVYYREGRDQLWKGPGELLWKGEGAVILKVGTEIKVVPRRKAKIIKD) form a DNA-binding region, integrase-type.

Homotrimer. Interacts with gp41 (via C-terminus). In terms of assembly, homodimer. The active site consists of two apposed aspartic acid residues. As to quaternary structure, heterodimer of p66 RT and p51 RT (RT p66/p51). Heterodimerization of RT is essential for DNA polymerase activity. Despite the sequence identities, p66 RT and p51 RT have distinct folding. Homotetramer; may further associate as a homohexadecamer. The cofactor is Mg(2+). Post-translationally, specific enzymatic cleavages by the viral protease yield mature proteins. The protease is released by autocatalytic cleavage. The polyprotein is cleaved during and after budding, this process is termed maturation. Proteolytic cleavage of p66 RT removes the RNase H domain to yield the p51 RT subunit. In terms of processing, capsid protein p24 is phosphorylated.

It is found in the virion. The protein localises to the host nucleus. The protein resides in the host cytoplasm. It localises to the host cell membrane. The enzyme catalyses Specific for a P1 residue that is hydrophobic, and P1' variable, but often Pro.. It carries out the reaction Endohydrolysis of RNA in RNA/DNA hybrids. Three different cleavage modes: 1. sequence-specific internal cleavage of RNA. Human immunodeficiency virus type 1 and Moloney murine leukemia virus enzymes prefer to cleave the RNA strand one nucleotide away from the RNA-DNA junction. 2. RNA 5'-end directed cleavage 13-19 nucleotides from the RNA end. 3. DNA 3'-end directed cleavage 15-20 nucleotides away from the primer terminus.. It catalyses the reaction 3'-end directed exonucleolytic cleavage of viral RNA-DNA hybrid.. The catalysed reaction is DNA(n) + a 2'-deoxyribonucleoside 5'-triphosphate = DNA(n+1) + diphosphate. With respect to regulation, the viral protease is inhibited by many synthetic protease inhibitors (PIs), such as amprenavir, atazanavir, indinavir, loprinavir, nelfinavir, ritonavir and saquinavir. RT can be inhibited either by nucleoside RT inhibitors (NRTIs) or by non nucleoside RT inhibitors (NNRTIs). NRTIs act as chain terminators, whereas NNRTIs inhibit DNA polymerization by binding a small hydrophobic pocket near the RT active site and inducing an allosteric change in this region. Classical NRTIs are abacavir, adefovir (PMEA), didanosine (ddI), lamivudine (3TC), stavudine (d4T), tenofovir (PMPA), zalcitabine (ddC), and zidovudine (AZT). Classical NNRTIs are atevirdine (BHAP U-87201E), delavirdine, efavirenz (DMP-266), emivirine (I-EBU), and nevirapine (BI-RG-587). The tritherapies used as a basic effective treatment of AIDS associate two NRTIs and one NNRTI. Use of protease inhibitors in tritherapy regimens permit more ambitious therapeutic strategies. Gag-Pol polyprotein and Gag polyprotein may regulate their own translation, by the binding genomic RNA in the 5'-UTR. At low concentration, Gag-Pol and Gag would promote translation, whereas at high concentration, the polyproteins encapsidate genomic RNA and then shut off translation. In terms of biological role, matrix protein p17 has two main functions: in infected cell, it targets Gag and Gag-pol polyproteins to the plasma membrane via a multipartite membrane-binding signal, that includes its myristointegration complex. The myristoylation signal and the NLS exert conflicting influences its subcellular localization. The key regulation of these motifs might be phosphorylation of a portion of MA molecules on the C-terminal tyrosine at the time of virus maturation, by virion-associated cellular tyrosine kinase. Implicated in the release from host cell mediated by Vpu. Functionally, capsid protein p24 forms the conical core that encapsulates the genomic RNA-nucleocapsid complex in the virion. The core is constituted by capsid protein hexamer subunits. The core is disassembled soon after virion entry. Interaction with host PPIA/CYPA protects the virus from restriction by host TRIM5-alpha and from an unknown antiviral activity in host cells. This capsid restriction by TRIM5 is one of the factors which restricts SIV to the simian species. Its function is as follows. Nucleocapsid protein p7 encapsulates and protects viral dimeric unspliced (genomic) RNA. Binds these RNAs through its zinc fingers. Facilitates rearangement of nucleic acid secondary structure during retrotranscription of genomic RNA. This capability is referred to as nucleic acid chaperone activity. The aspartyl protease mediates proteolytic cleavages of Gag and Gag-Pol polyproteins during or shortly after the release of the virion from the plasma membrane. Cleavages take place as an ordered, step-wise cascade to yield mature proteins. This process is called maturation. Displays maximal activity during the budding process just prior to particle release from the cell. Also cleaves Nef and Vif, probably concomitantly with viral structural proteins on maturation of virus particles. Hydrolyzes host EIF4GI and PABP1 in order to shut off the capped cellular mRNA translation. The resulting inhibition of cellular protein synthesis serves to ensure maximal viral gene expression and to evade host immune response. In terms of biological role, reverse transcriptase/ribonuclease H (RT) is a multifunctional enzyme that converts the viral dimeric RNA genome into dsDNA in the cytoplasm, shortly after virus entry into the cell. This enzyme displays a DNA polymerase activity that can copy either DNA or RNA templates, and a ribonuclease H (RNase H) activity that cleaves the RNA strand of RNA-DNA heteroduplexes in a partially processive 3' to 5' endonucleasic mode. Conversion of viral genomic RNA into dsDNA requires many steps. A tRNA binds to the primer-binding site (PBS) situated at the 5'-end of the viral RNA. RT uses the 3' end of the tRNA primer to perform a short round of RNA-dependent minus-strand DNA synthesis. The reading proceeds through the U5 region and ends after the repeated (R) region which is present at both ends of viral RNA. The portion of the RNA-DNA heteroduplex is digested by the RNase H, resulting in a ssDNA product attached to the tRNA primer. This ssDNA/tRNA hybridizes with the identical R region situated at the 3' end of viral RNA. This template exchange, known as minus-strand DNA strong stop transfer, can be either intra- or intermolecular. RT uses the 3' end of this newly synthesized short ssDNA to perform the RNA-dependent minus-strand DNA synthesis of the whole template. RNase H digests the RNA template except for two polypurine tracts (PPTs) situated at the 5'-end and near the center of the genome. It is not clear if both polymerase and RNase H activities are simultaneous. RNase H can probably proceed both in a polymerase-dependent (RNA cut into small fragments by the same RT performing DNA synthesis) and a polymerase-independent mode (cleavage of remaining RNA fragments by free RTs). Secondly, RT performs DNA-directed plus-strand DNA synthesis using the PPTs that have not been removed by RNase H as primers. PPTs and tRNA primers are then removed by RNase H. The 3' and 5' ssDNA PBS regions hybridize to form a circular dsDNA intermediate. Strand displacement synthesis by RT to the PBS and PPT ends produces a blunt ended, linear dsDNA copy of the viral genome that includes long terminal repeats (LTRs) at both ends. Functionally, integrase catalyzes viral DNA integration into the host chromosome, by performing a series of DNA cutting and joining reactions. This enzyme activity takes place after virion entry into a cell and reverse transcription of the RNA genome in dsDNA. The first step in the integration process is 3' processing. This step requires a complex comprising the viral genome, matrix protein, Vpr and integrase. This complex is called the pre-integration complex (PIC). The integrase protein removes 2 nucleotides from each 3' end of the viral DNA, leaving recessed CA OH's at the 3' ends. In the second step, the PIC enters cell nucleus. This process is mediated through integrase and Vpr proteins, and allows the virus to infect a non dividing cell. This ability to enter the nucleus is specific of lentiviruses, other retroviruses cannot and rely on cell division to access cell chromosomes. In the third step, termed strand transfer, the integrase protein joins the previously processed 3' ends to the 5' ends of strands of target cellular DNA at the site of integration. The 5'-ends are produced by integrase-catalyzed staggered cuts, 5 bp apart. A Y-shaped, gapped, recombination intermediate results, with the 5'-ends of the viral DNA strands and the 3' ends of target DNA strands remaining unjoined, flanking a gap of 5 bp. The last step is viral DNA integration into host chromosome. This involves host DNA repair synthesis in which the 5 bp gaps between the unjoined strands are filled in and then ligated. Since this process occurs at both cuts flanking the SIV genome, a 5 bp duplication of host DNA is produced at the ends of SIV integration. Alternatively, Integrase may catalyze the excision of viral DNA just after strand transfer, this is termed disintegration. This chain is Gag-Pol polyprotein (gag-pol), found in Cercopithecidae (Old World monkeys).